A 778-amino-acid polypeptide reads, in one-letter code: Semaphorin-3ab (778 aa).

Residues 1 to 17 form the signal peptide; it reads MDYLWWIVLLIWTLIAP. Residues 32–515 form the Sema domain; it reads RLKPSYKEML…SAIGVSQMPL (484 aa). Asparagine 54 carries an N-linked (GlcNAc...) asparagine glycan. Residues cysteine 105 and cysteine 116 are joined by a disulfide bond. An N-linked (GlcNAc...) asparagine glycan is attached at asparagine 127. Cystine bridges form between cysteine 134-cysteine 143, cysteine 270-cysteine 382, cysteine 294-cysteine 342, and cysteine 518-cysteine 536. One can recognise an Ig-like C2-type domain in the interval 579–668; sequence GEAGLLDKTV…FIQTLLRLTL (90 aa). The N-linked (GlcNAc...) asparagine glycan is linked to asparagine 593. The cysteines at positions 652 and 716 are disulfide-linked. The disordered stretch occupies residues 727 to 778; the sequence is RRQKANLLHASQSHTSQILHSSQSHAKWKLLQENKKGRNRRTHEMQRAPRSV. Residues 735–751 are compositionally biased toward polar residues; the sequence is HASQSHTSQILHSSQSH. A compositionally biased stretch (basic and acidic residues) spans 756-778; the sequence is LLQENKKGRNRRTHEMQRAPRSV.

The protein belongs to the semaphorin family. Expressed in rhombomeres three and five, and in the posterior half of newly formed somites which is avoided by ventrally extending motor axons.

Its subcellular location is the secreted. In terms of biological role, might normally influence the midsegmental pathway choice of the ventrally extending motor axons by contributing to a repulsive domain in the posterior somite. This is Semaphorin-3ab (sema3ab) from Danio rerio (Zebrafish).